We begin with the raw amino-acid sequence, 591 residues long: CTP synthase 1 (591 aa).

Residues 300-554 (SIALVGKYTK…LAAAGRLQSY (255 aa)) enclose the Glutamine amidotransferase type-1 domain. Active-site for GATase activity residues include Cys-399, His-526, and Glu-528. Residues Ser-571 and Ser-575 each carry the phosphoserine modification.

The protein belongs to the CTP synthase family.

The enzyme catalyses UTP + L-glutamine + ATP + H2O = CTP + L-glutamate + ADP + phosphate + 2 H(+). Its pathway is pyrimidine metabolism; CTP biosynthesis via de novo pathway; CTP from UDP: step 2/2. Its function is as follows. This enzyme is involved in the de novo synthesis of CTP, a precursor of DNA, RNA and phospholipids. Catalyzes the ATP-dependent amination of UTP to CTP with either L-glutamine or ammonia as a source of nitrogen. This chain is CTP synthase 1 (ctps1), found in Danio rerio (Zebrafish).